Here is a 1153-residue protein sequence, read N- to C-terminus: ATP-dependent helicase/deoxyribonuclease subunit B (1153 aa).

The UvrD-like helicase ATP-binding domain occupies 1-289 (MELNAYIGRA…KHLEQNFNAL (289 aa)). 8-15 (GRAGTGKS) is an ATP binding site. The 315-residue stretch at 269–583 (LDVQRFIHND…SIGTMDLAKV (315 aa)) folds into the UvrD-like helicase C-terminal domain. [4Fe-4S] cluster is bound by residues C784, C1110, C1113, and C1119.

The protein belongs to the helicase family. AddB/RexB type 1 subfamily. Heterodimer of AddA and AddB. Mg(2+) serves as cofactor. Requires [4Fe-4S] cluster as cofactor.

Its function is as follows. The heterodimer acts as both an ATP-dependent DNA helicase and an ATP-dependent, dual-direction single-stranded exonuclease. Recognizes the chi site generating a DNA molecule suitable for the initiation of homologous recombination. The AddB subunit has 5' -&gt; 3' nuclease activity but not helicase activity. The sequence is that of ATP-dependent helicase/deoxyribonuclease subunit B from Staphylococcus saprophyticus subsp. saprophyticus (strain ATCC 15305 / DSM 20229 / NCIMB 8711 / NCTC 7292 / S-41).